The following is a 123-amino-acid chain: Small ribosomal subunit protein uS13 (123 aa).

A disordered region spans residues 89–123 (GRRHRSGLPVRGQRTRTNARTRKGKRKAVAKKKAK). A compositionally biased stretch (basic residues) spans 101-123 (QRTRTNARTRKGKRKAVAKKKAK).

Belongs to the universal ribosomal protein uS13 family. Part of the 30S ribosomal subunit. Forms a loose heterodimer with protein S19. Forms two bridges to the 50S subunit in the 70S ribosome.

Functionally, located at the top of the head of the 30S subunit, it contacts several helices of the 16S rRNA. In the 70S ribosome it contacts the 23S rRNA (bridge B1a) and protein L5 of the 50S subunit (bridge B1b), connecting the 2 subunits; these bridges are implicated in subunit movement. Contacts the tRNAs in the A and P-sites. This Cutibacterium acnes (strain DSM 16379 / KPA171202) (Propionibacterium acnes) protein is Small ribosomal subunit protein uS13.